The chain runs to 64 residues: Large ribosomal subunit protein uL29 (64 aa).

It belongs to the universal ribosomal protein uL29 family.

In Cupriavidus metallidurans (strain ATCC 43123 / DSM 2839 / NBRC 102507 / CH34) (Ralstonia metallidurans), this protein is Large ribosomal subunit protein uL29.